A 77-amino-acid polypeptide reads, in one-letter code: Putative antitoxin VapB24 (77 aa).

In terms of biological role, possibly the antitoxin component of a type II toxin-antitoxin (TA) system. Its cognate toxin is VapC24 (Potential). This is Putative antitoxin VapB24 (vapB24) from Mycobacterium tuberculosis (strain CDC 1551 / Oshkosh).